We begin with the raw amino-acid sequence, 326 residues long: L-lactate dehydrogenase (326 aa).

NAD(+) contacts are provided by residues valine 20, aspartate 41, lysine 46, tyrosine 71, and 85–86 (GA). Residues glutamine 88 and arginine 94 each contribute to the substrate site. NAD(+) is bound by residues serine 107, 124 to 126 (AAN), and serine 149. 126–129 (NPVD) is a substrate binding site. 154 to 157 (DTAR) is a binding site for substrate. Beta-D-fructose 1,6-bisphosphate contacts are provided by residues arginine 159, 171–174 (RSVH), and histidine 174. Histidine 181 functions as the Proton acceptor in the catalytic mechanism. Position 226 is a phosphotyrosine (tyrosine 226). Threonine 235 contacts substrate.

It belongs to the LDH/MDH superfamily. LDH family. As to quaternary structure, homotetramer.

It is found in the cytoplasm. It catalyses the reaction (S)-lactate + NAD(+) = pyruvate + NADH + H(+). The protein operates within fermentation; pyruvate fermentation to lactate; (S)-lactate from pyruvate: step 1/1. Its activity is regulated as follows. Allosterically activated by fructose 1,6-bisphosphate (FBP) alone under acidic conditions, while it requires additional activation factors such as divalent cations (Mn(2+)) under neutral conditions. Under acidic conditions, Mn(2+) is an inhibitor in the absence of fructose 1,6-bisphosphate (FBP). In case of L.casei, L-LDH binds four fructose 1,6-bisphosphate (FBP) molecules per tetramer, while usual allosteric L-LDH binds only two fructose 1,6-bisphosphate (FBP) molecules per tetramer. Its function is as follows. Catalyzes the conversion of lactate to pyruvate. The chain is L-lactate dehydrogenase from Lacticaseibacillus casei (Lactobacillus casei).